The sequence spans 201 residues: Small ribosomal subunit protein uS4c (201 aa).

The tract at residues 17-44 (ALPGLTNKKPRTGSDLRNQSRSGKKSQY) is disordered. One can recognise an S4 RNA-binding domain in the interval 89–149 (MRLDNILFRL…DEQKSRALIQ (61 aa)).

It belongs to the universal ribosomal protein uS4 family. In terms of assembly, part of the 30S ribosomal subunit. Contacts protein S5. The interaction surface between S4 and S5 is involved in control of translational fidelity.

The protein localises to the plastid. Its subcellular location is the chloroplast. Functionally, one of the primary rRNA binding proteins, it binds directly to 16S rRNA where it nucleates assembly of the body of the 30S subunit. In terms of biological role, with S5 and S12 plays an important role in translational accuracy. The protein is Small ribosomal subunit protein uS4c (rps4) of Atropa belladonna (Belladonna).